The chain runs to 420 residues: Uteroferrin-associated basic protein 2 (420 aa).

Residues 1-25 form the signal peptide; the sequence is MSHGKMPLVLSLVLILCGLFNSISC. Asn225, Asn271, and Asn343 each carry an N-linked (GlcNAc...) asparagine glycan.

It belongs to the serpin family. UTMP subfamily.

It localises to the secreted. The protein resides in the extracellular space. In Sus scrofa (Pig), this protein is Uteroferrin-associated basic protein 2.